We begin with the raw amino-acid sequence, 636 residues long: Threonine--tRNA ligase (636 aa).

In terms of domain architecture, TGS spans 1–61; that stretch reads MINITLPDGK…ETDASVVFIT (61 aa). The interval 238–528 is catalytic; that stretch reads DHRKLGTALD…LIEHYAGKFP (291 aa). Residues cysteine 329, histidine 380, and histidine 505 each coordinate Zn(2+).

This sequence belongs to the class-II aminoacyl-tRNA synthetase family. As to quaternary structure, homodimer. The cofactor is Zn(2+).

The protein localises to the cytoplasm. It catalyses the reaction tRNA(Thr) + L-threonine + ATP = L-threonyl-tRNA(Thr) + AMP + diphosphate + H(+). Functionally, catalyzes the attachment of threonine to tRNA(Thr) in a two-step reaction: L-threonine is first activated by ATP to form Thr-AMP and then transferred to the acceptor end of tRNA(Thr). Also edits incorrectly charged L-seryl-tRNA(Thr). The protein is Threonine--tRNA ligase of Desulfatibacillum aliphaticivorans.